The sequence spans 136 residues: Cytochrome c oxidase subunit 13, mitochondrial (136 aa).

A mitochondrion-targeting transit peptide spans 1–29; that stretch reads MFAQRQMFFARLAANLRAPAVRQTVQRRF. At 30–62 the chain is on the mitochondrial matrix side; sequence ASTPANESGKNAFVREREAVKQHAAETTELWRK. A helical transmembrane segment spans residues 63–83; that stretch reads ISLYGIPPALALAGYNAYTLY. Topologically, residues 84 to 136 are mitochondrial intermembrane; sequence NEHWEHWSHLPPLEERTEYPYQNIRTRNYPWGDGDKTLFWNESVNYHNRDKVT.

It belongs to the cytochrome c oxidase subunit 6A family. As to quaternary structure, component of the cytochrome c oxidase (complex IV, CIV), a multisubunit enzyme composed of 11 subunits. The complex is composed of a catalytic core of 3 subunits Cox1, Cox2 and Cox3, encoded in the mitochondrial DNA, and 8 supernumerary subunits Cox4, Cox5a/Cox5, Cox6, Cox7, Cox8, Cox7a/Cox9, Cox6b/Cox12 and Cox6a/Cox13, which are encoded in the nuclear genome. The complex exists as a monomer or a dimer and forms respiratory supercomplexes (SCs) in the inner mitochondrial membrane with NADH-ubiquinone oxidoreductase (complex I, CI) and ubiquinol-cytochrome c oxidoreductase (cytochrome b-c1 complex, complex III, CIII), resulting in various different assemblies (supercomplexes I(1)IV(1), I(1)III(3)IV(2), III(2)IV(1) and III(2)IV(2) as well as larger supercomplexes of compositions like I(1)III(2)IV(5-6)). Cox6a/Cox13 was not present in the cryo-EM structure. It may be involved in complex IV dimer formation and might not be always expressed. This would explain its absence in the map of the isolated monomer.

It is found in the mitochondrion inner membrane. The protein operates within energy metabolism; oxidative phosphorylation. Functionally, component of the cytochrome c oxidase, the last enzyme in the mitochondrial electron transport chain which drives oxidative phosphorylation. The respiratory chain contains 3 multisubunit complexes succinate dehydrogenase (complex II, CII), ubiquinol-cytochrome c oxidoreductase (cytochrome b-c1 complex, complex III, CIII) and cytochrome c oxidase (complex IV, CIV), that cooperate to transfer electrons derived from NADH and succinate to molecular oxygen, creating an electrochemical gradient over the inner membrane that drives transmembrane transport and the ATP synthase. Cytochrome c oxidase is the component of the respiratory chain that catalyzes the reduction of oxygen to water. Electrons originating from reduced cytochrome c in the intermembrane space (IMS) are transferred via the dinuclear copper A center (CU(A)) of Cox2 and heme A of Cox1 to the active site in Cox1, a binuclear center (BNC) formed by heme A3 and copper B (CU(B)). The BNC reduces molecular oxygen to 2 water molecules using 4 electrons from cytochrome c in the IMS and 4 protons from the mitochondrial matrix. The sequence is that of Cytochrome c oxidase subunit 13, mitochondrial (eat-5) from Neurospora crassa (strain ATCC 24698 / 74-OR23-1A / CBS 708.71 / DSM 1257 / FGSC 987).